Consider the following 399-residue polypeptide: Arylacetamide deacetylase (399 aa).

Topologically, residues 1-4 (MRKK) are cytoplasmic. Residues 5 to 25 (YFGFLILGVLLAGYIYVPLPD) traverse the membrane as a helical; Signal-anchor for type II membrane protein segment. The Lumenal portion of the chain corresponds to 26–399 (NVEEPWKIML…QYINWLHENL (374 aa)). The Involved in the stabilization of the negatively charged intermediate by the formation of the oxyanion hole motif lies at 111-113 (HGG). Cys116 and Cys340 are oxidised to a cystine. Ser189 is a catalytic residue. Asn282 carries N-linked (GlcNAc...) asparagine glycosylation. Active-site residues include Asp343 and His373.

This sequence belongs to the 'GDXG' lipolytic enzyme family.

It localises to the endoplasmic reticulum membrane. The protein localises to the microsome membrane. It catalyses the reaction a triacylglycerol + H2O = a diacylglycerol + a fatty acid + H(+). Its function is as follows. Displays cellular triglyceride lipase activity in liver, increases the levels of intracellular fatty acids derived from the hydrolysis of newly formed triglyceride stores and plays a role in very low-density lipoprotein assembly. Displays serine esterase activity in liver. Deacetylates a variety of arylacetamide substrates, including xenobiotic compounds and procarcinogens, converting them to the primary arylamide compounds and increasing their toxicity. This is Arylacetamide deacetylase (AADAC) from Bos taurus (Bovine).